Consider the following 156-residue polypeptide: MSRRHSAEKREVNPDPKFGNVILTKFMNSVMYAGKKSVAEGIVYGALEIIEAKTKQGPLPVFEQALENVMPTIEVRSRRVGGATYQVPVEVRSVRRQALGIRWLISAARDRNEKTMTERLSAELLDASNGRGNAVKKREDVHRMAEANRAFSHYRW.

It belongs to the universal ribosomal protein uS7 family. As to quaternary structure, part of the 30S ribosomal subunit. Contacts proteins S9 and S11.

One of the primary rRNA binding proteins, it binds directly to 16S rRNA where it nucleates assembly of the head domain of the 30S subunit. Is located at the subunit interface close to the decoding center, probably blocks exit of the E-site tRNA. This Rhodopseudomonas palustris (strain BisB18) protein is Small ribosomal subunit protein uS7.